A 70-amino-acid chain; its full sequence is MKSQTFFLLFLVVLLLAISQSEAFIGAIANLLSKIFGKRSMRDMDTMKYLYDPSLSAADLKTLQKLMENY.

The N-terminal stretch at 1-23 is a signal peptide; that stretch reads MKSQTFFLLFLVVLLLAISQSEA. Phe-36 is modified (phenylalanine amide). Residues 40 to 70 constitute a propeptide that is removed on maturation; that stretch reads SMRDMDTMKYLYDPSLSAADLKTLQKLMENY.

It belongs to the non-disulfide-bridged peptide (NDBP) superfamily. Short antimicrobial peptide (group 4) family. Expressed by the venom gland.

It is found in the secreted. The protein resides in the target cell membrane. Antimicrobial peptide with potent activity against bacteria. Has strong antibacterial activity against Gram-positive bacteria S.aureus, M.luteus, B.subtilis, and Gram-negative bacteria E.coli, P.aeruginosa and N.gonorrhoeae. Also shows low activity against HIV-1 PV. This is Peptide BmKn2 from Olivierus martensii (Manchurian scorpion).